The following is a 505-amino-acid chain: ATP synthase subunit alpha (505 aa).

170-177 (GDRQTGKT) contributes to the ATP binding site.

Belongs to the ATPase alpha/beta chains family. F-type ATPases have 2 components, CF(1) - the catalytic core - and CF(0) - the membrane proton channel. CF(1) has five subunits: alpha(3), beta(3), gamma(1), delta(1), epsilon(1). CF(0) has four main subunits: a(1), b(1), b'(1) and c(9-12).

Its subcellular location is the cellular thylakoid membrane. The catalysed reaction is ATP + H2O + 4 H(+)(in) = ADP + phosphate + 5 H(+)(out). Functionally, produces ATP from ADP in the presence of a proton gradient across the membrane. The alpha chain is a regulatory subunit. In Synechococcus sp. (strain RCC307), this protein is ATP synthase subunit alpha.